Consider the following 372-residue polypeptide: N-methyl-L-tryptophan oxidase (372 aa).

Residue 4–34 coordinates FAD; that stretch reads DLIIIGSGSVGAAAGYYATRAGLNVLMTDAH. Cys-308 carries the post-translational modification S-8alpha-FAD cysteine.

Belongs to the MSOX/MTOX family. MTOX subfamily. In terms of assembly, monomer. FAD is required as a cofactor.

The catalysed reaction is N(alpha)-methyl-L-tryptophan + O2 + H2O = L-tryptophan + formaldehyde + H2O2. Functionally, catalyzes the oxidative demethylation of N-methyl-L-tryptophan. The polypeptide is N-methyl-L-tryptophan oxidase (Escherichia coli O127:H6 (strain E2348/69 / EPEC)).